Reading from the N-terminus, the 294-residue chain is Protoheme IX farnesyltransferase (294 aa).

The next 9 helical transmembrane spans lie at 13-33, 35-55, 84-104, 107-127, 132-152, 162-182, 208-228, 229-249, and 264-284; these read IIFG…KGVI, YPLF…GCVF, ISLI…YAAA, LAMQ…SLYM, VYGT…GYCA, LILL…IAIF, IILY…SGYA, GYKY…MALS, and FIFS…DPHV.

It belongs to the UbiA prenyltransferase family. Protoheme IX farnesyltransferase subfamily.

It is found in the cell inner membrane. The enzyme catalyses heme b + (2E,6E)-farnesyl diphosphate + H2O = Fe(II)-heme o + diphosphate. Its pathway is porphyrin-containing compound metabolism; heme O biosynthesis; heme O from protoheme: step 1/1. Its function is as follows. Converts heme B (protoheme IX) to heme O by substitution of the vinyl group on carbon 2 of heme B porphyrin ring with a hydroxyethyl farnesyl side group. The sequence is that of Protoheme IX farnesyltransferase from Photorhabdus laumondii subsp. laumondii (strain DSM 15139 / CIP 105565 / TT01) (Photorhabdus luminescens subsp. laumondii).